The following is a 260-amino-acid chain: Thiamine thiazole synthase (260 aa).

Residues S41, 60–61, G68, V131, and 159–161 contribute to the NAD(+) site; these read ER and HVD. Fe cation-binding residues include D161 and H176. Position 225 (M225) interacts with NAD(+). A glycine-binding site is contributed by R235.

The protein belongs to the THI4 family. Homooctamer; tetramer of dimers. It depends on Fe(2+) as a cofactor.

It catalyses the reaction hydrogen sulfide + glycine + NAD(+) = ADP-5-ethyl-4-methylthiazole-2-carboxylate + nicotinamide + 3 H2O + H(+). The protein operates within cofactor biosynthesis; thiamine diphosphate biosynthesis. In terms of biological role, involved in the biosynthesis of the thiazole moiety of thiamine. Catalyzes the conversion of NAD and glycine to adenosine diphosphate 5-(2-hydroxyethyl)-4-methylthiazole-2-carboxylate (ADT), an adenylated thiazole intermediate, using free sulfide as a source of sulfur. This Archaeoglobus fulgidus (strain ATCC 49558 / DSM 4304 / JCM 9628 / NBRC 100126 / VC-16) protein is Thiamine thiazole synthase.